The sequence spans 61 residues: Large ribosomal subunit protein eL37 (61 aa).

Zn(2+) is bound by residues Cys20, Cys23, Cys35, and Cys38. The segment at 20-38 (CPRCGRHSYNIVKGYCAAC) adopts a C4-type zinc-finger fold.

It belongs to the eukaryotic ribosomal protein eL37 family. It depends on Zn(2+) as a cofactor.

Functionally, binds to the 23S rRNA. The chain is Large ribosomal subunit protein eL37 from Caldivirga maquilingensis (strain ATCC 700844 / DSM 13496 / JCM 10307 / IC-167).